A 330-amino-acid polypeptide reads, in one-letter code: Phosphate acyltransferase (330 aa).

The protein belongs to the PlsX family. Homodimer. Probably interacts with PlsY.

It localises to the cytoplasm. It catalyses the reaction a fatty acyl-[ACP] + phosphate = an acyl phosphate + holo-[ACP]. It functions in the pathway lipid metabolism; phospholipid metabolism. In terms of biological role, catalyzes the reversible formation of acyl-phosphate (acyl-PO(4)) from acyl-[acyl-carrier-protein] (acyl-ACP). This enzyme utilizes acyl-ACP as fatty acyl donor, but not acyl-CoA. In Carboxydothermus hydrogenoformans (strain ATCC BAA-161 / DSM 6008 / Z-2901), this protein is Phosphate acyltransferase.